The chain runs to 160 residues: Invasion protein IagB (160 aa).

Residues 1-19 (MHYFFIIVIWLLSINTAWA) form the signal peptide.

The protein belongs to the IagB/IpgF/P19 family.

The polypeptide is Invasion protein IagB (iagB) (Salmonella typhi).